Here is a 494-residue protein sequence, read N- to C-terminus: Neuronal acetylcholine receptor subunit alpha-6 (494 aa).

The N-terminal stretch at 1–30 (MLNSRDQGNLHSGLCLWLCGFLALFKGSTG) is a signal peptide. Over 31–240 (CESEEQLFHR…TYSFYIRRLP (210 aa)) the chain is Extracellular. Residues Asn-54 and Asn-171 are each glycosylated (N-linked (GlcNAc...) asparagine). Intrachain disulfides connect Cys-158–Cys-172 and Cys-222–Cys-223. 3 helical membrane-spanning segments follow: residues 241-265 (MFYT…FYLP), 272-290 (VTLC…LVIT), and 306-327 (YLLF…VLNI). Topologically, residues 328-465 (HYRTPATHTM…WKYMAMVVDR (138 aa)) are cytoplasmic. Residues 399–423 (QKSSDIAPGKRRSSQQPARWVAENS) are disordered. The residue at position 401 (Ser-401) is a Phosphoserine. The chain crosses the membrane as a helical span at residues 466 to 485 (VFLWVFIIVCVFGTVGLFLQ).

It belongs to the ligand-gated ion channel (TC 1.A.9) family. Acetylcholine receptor (TC 1.A.9.1) subfamily. Alpha-6/CHRNA6 sub-subfamily. Neuronal AChR is composed of two different types of subunits: alpha and non-alpha (beta). CHRNA6/alpha-6 subunit can be combined to CHRNB2/beta-2 and CHRNA4/alpha-4 to give rise to functional receptors. Interacts with LYPD6. In terms of tissue distribution, predominantly expressed in only a few brain areas, including dopaminergic neurons, norepirephrine neurons and cells of the visual system.

The protein resides in the synaptic cell membrane. The catalysed reaction is K(+)(in) = K(+)(out). The enzyme catalyses Na(+)(in) = Na(+)(out). It catalyses the reaction Ca(2+)(in) = Ca(2+)(out). Its activity is regulated as follows. Activated by a myriad of ligands such as acetylcholine, cytisine and nicotine. CHRNA6 nAChR activity is inhibited by the antagonists alpha-conotoxin MII and PIA, a small disulfide-constrained peptides from cone snails. Functionally, component of neuronal acetylcholine receptors (nAChRs) that function as pentameric, ligand-gated cation channels with high calcium permeability among other activities. nAChRs are excitatory neurotrasnmitter receptors formed by a collection of nAChR subunits known to mediate synaptic transmission in the nervous system and the neuromuscular junction. Each nAchR subunit confers differential attributes to channel properties, including activation, deactivation and desensitization kinetics, pH sensitivity, cation permeability, and binding to allosteric modulators. CHRNA6 forms pentameric channels with CHRNB2 and CHRNA4 that exhibit high sensitivity to ACh and nicotine and are predominantly expressed in only a few brain areas, including dopaminergic neurons, norepirephrine neurons and cells of the visual system. nAChrs containing CHRNA6 subunits mediate endogenous cholinergic modulation of dopamine and gamma-aminobutyric acid (GABA) release in response to nicotine at nerve terminals. This is Neuronal acetylcholine receptor subunit alpha-6 (Chrna6) from Mus musculus (Mouse).